We begin with the raw amino-acid sequence, 142 residues long: Baculoviral IAP repeat-containing protein 5 (142 aa).

One copy of the BIR repeat lies at 18–88 (RVSTFKNWPF…KHSSGCAFLS (71 aa)). S20 carries the post-translational modification Phosphoserine; by AURKC. K23 is subject to N6-acetyllysine. T34 bears the Phosphothreonine; by CDK1 and CDK15 mark. T48 carries the post-translational modification Phosphothreonine; by CK2; in vitro. The Zn(2+) site is built by C57, C60, H77, and C84. An N6-acetyllysine mark is found at K90, K110, K112, and K115. A Phosphothreonine; by AURKB modification is found at T117.

The protein belongs to the IAP family. Monomer or homodimer. Exists as a homodimer in the apo state and as a monomer in the CPC-bound state. The monomer protects cells against apoptosis more efficiently than the dimer. Only the dimeric form is capable of enhancing tubulin stability in cells. When phosphorylated, interacts with LAMTOR5/HBXIP; the resulting complex binds pro-CASP9, as well as active CASP9, but much less efficiently. Component of the chromosomal passenger complex (CPC) composed of at least BIRC5/survivin, CDCA8/borealin, INCENP, AURKB or AURKC; in the complex forms a triple-helix bundle-based subcomplex with INCENP and CDCA8. Interacts with JTB. Interacts (via BIR domain) with histone H3 phosphorylated at 'Thr-3' (H3pT3). Interacts with EVI5. Interacts with GTP-bound RAN in both the S and M phases of the cell cycle. Interacts with USP9X. Interacts with tubulin. Interacts with BIRC2/c-IAP1. The monomeric form interacts with XIAP/BIRC4. Both the dimeric and monomeric form can interact with DIABLO/SMAC. Interacts with BIRC6/bruce. Interacts with FBXL7; this interaction facilitates the polyubiquitination and subsequent proteasomal degradation of BIRC5 by the SCF(FBXL7) E3 ubiquitin-protein ligase complex. In terms of processing, ubiquitinated by the Cul9-RING ubiquitin-protein ligase complex, leading to its degradation. Ubiquitination is required for centrosomal targeting. Deubiquitinated by USP35 or USP38; leading to stabilization. In vitro phosphorylation at Thr-117 by AURKB prevents interaction with INCENP and localization to mitotic chromosomes. Phosphorylation at Thr-48 by CK2 is critical for its mitotic and anti-apoptotic activities. Phosphorylation at Thr-34 by CDK15 is critical for its anti-apoptotic activity. Phosphorylation at Ser-20 by AURKC is critical for regulation of proper chromosome alignment and segregation, and possibly cytokinesis. As to expression, expressed in spleen, lung, brain, heart, kidney and intestine (at protein level). Expressed in cochlea including the organ of Corti, the lateral wall, the interdental cells of the Limbus as well as in cells of the cochlear nerve and the spiral ganglions (at protein level). Also expressed in Schwann cells (at protein level). Not expressed in cells of the inner and outer sulcus or the Reissner's membrane (at protein level).

Its subcellular location is the cytoplasm. It is found in the nucleus. The protein localises to the chromosome. The protein resides in the centromere. It localises to the cytoskeleton. Its subcellular location is the spindle. It is found in the kinetochore. The protein localises to the midbody. In terms of biological role, multitasking protein that has dual roles in promoting cell proliferation and preventing apoptosis. Component of a chromosome passage protein complex (CPC) which is essential for chromosome alignment and segregation during mitosis and cytokinesis. Acts as an important regulator of the localization of this complex; directs CPC movement to different locations from the inner centromere during prometaphase to midbody during cytokinesis and participates in the organization of the center spindle by associating with polymerized microtubules. Involved in the recruitment of CPC to centromeres during early mitosis via association with histone H3 phosphorylated at 'Thr-3' (H3pT3) during mitosis. The complex with RAN plays a role in mitotic spindle formation by serving as a physical scaffold to help deliver the RAN effector molecule TPX2 to microtubules. May counteract a default induction of apoptosis in G2/M phase. The acetylated form represses STAT3 transactivation of target gene promoters. May play a role in neoplasia. Inhibitor of CASP3 and CASP7. Essential for the maintenance of mitochondrial integrity and function. The chain is Baculoviral IAP repeat-containing protein 5 from Cavia porcellus (Guinea pig).